We begin with the raw amino-acid sequence, 962 residues long: Translation initiation factor IF-2 (962 aa).

Residues 101 to 366 (AAQTQAAPVR…KKGKKLKLEP (266 aa)) form a disordered region. A compositionally biased stretch (basic and acidic residues) spans 117 to 141 (DAAKARAEAATRAEARAKAEAEAAK). Residues 145 to 157 (AKAGNKAKPAAQK) are compositionally biased toward low complexity. Basic and acidic residues predominate over residues 173-216 (KPAEESKAEKAQADKMPSKKPAEPKEKAAKPKHERNGKGKDAKK). The span at 219–234 (KPAAPAVPQPVVSAEE) shows a compositional bias: low complexity. A compositionally biased stretch (basic and acidic residues) spans 235 to 269 (QAQRDEEARRAAALRAHQEALLKEKQERQARREAM). Low complexity predominate over residues 270–283 (KQQAEQQAKAAQEA). A compositionally biased stretch (basic and acidic residues) spans 338-354 (GGRDRNNARNGDDERVR). The region spanning 462–631 (PRPPVVTVMG…LLEAEVLELT (170 aa)) is the tr-type G domain. The G1 stretch occupies residues 471-478 (GHVDHGKT). 471–478 (GHVDHGKT) serves as a coordination point for GTP. The G2 stretch occupies residues 496-500 (GITQH). Positions 517–520 (DTPG) are G3. GTP contacts are provided by residues 517–521 (DTPGH) and 571–574 (NKID). The segment at 571–574 (NKID) is G4. Positions 607–609 (SAK) are G5.

Belongs to the TRAFAC class translation factor GTPase superfamily. Classic translation factor GTPase family. IF-2 subfamily.

It is found in the cytoplasm. In terms of biological role, one of the essential components for the initiation of protein synthesis. Protects formylmethionyl-tRNA from spontaneous hydrolysis and promotes its binding to the 30S ribosomal subunits. Also involved in the hydrolysis of GTP during the formation of the 70S ribosomal complex. The chain is Translation initiation factor IF-2 from Neisseria meningitidis serogroup A / serotype 4A (strain DSM 15465 / Z2491).